The following is a 1177-amino-acid chain: Dynein axonemal assembly factor 9 (1177 aa).

Residues 1-27 (MDVYPPRRQGLPRARSPGGSSRGSPSV) form a disordered region. Low complexity predominate over residues 11–27 (LPRARSPGGSSRGSPSV).

In terms of assembly, interacts with ARL3.

Functionally, may act as an effector for ARL3. This chain is Dynein axonemal assembly factor 9, found in Homo sapiens (Human).